The sequence spans 309 residues: tRNA uridine(34) hydroxylase (309 aa).

Residues 123 to 217 form the Rhodanese domain; sequence DDPEVIVVDT…YLEEVPEEQT (95 aa). Residue Cys177 is the Cysteine persulfide intermediate of the active site.

This sequence belongs to the TrhO family.

The enzyme catalyses uridine(34) in tRNA + AH2 + O2 = 5-hydroxyuridine(34) in tRNA + A + H2O. In terms of biological role, catalyzes oxygen-dependent 5-hydroxyuridine (ho5U) modification at position 34 in tRNAs. This chain is tRNA uridine(34) hydroxylase, found in Saccharophagus degradans (strain 2-40 / ATCC 43961 / DSM 17024).